The following is a 247-amino-acid chain: 2,3-bisphosphoglycerate-dependent phosphoglycerate mutase (247 aa).

Substrate is bound by residues 8 to 15, 21 to 22, Arg-60, 87 to 90, Lys-98, 114 to 115, and 183 to 184; these read RHGESQWN, TG, ERHY, RR, and GN. His-9 acts as the Tele-phosphohistidine intermediate in catalysis. Glu-87 acts as the Proton donor/acceptor in catalysis.

The protein belongs to the phosphoglycerate mutase family. BPG-dependent PGAM subfamily.

The catalysed reaction is (2R)-2-phosphoglycerate = (2R)-3-phosphoglycerate. Its pathway is carbohydrate degradation; glycolysis; pyruvate from D-glyceraldehyde 3-phosphate: step 3/5. Its function is as follows. Catalyzes the interconversion of 2-phosphoglycerate and 3-phosphoglycerate. This is 2,3-bisphosphoglycerate-dependent phosphoglycerate mutase from Chlorobium limicola (strain DSM 245 / NBRC 103803 / 6330).